Reading from the N-terminus, the 107-residue chain is UPF0045 protein in glkA 3'region (107 aa).

It belongs to the UPF0045 family.

The protein is UPF0045 protein in glkA 3'region (dglA) of Staphylococcus xylosus.